A 474-amino-acid chain; its full sequence is Glutamate--tRNA ligase (474 aa).

The 'HIGH' region motif lies at 9 to 19 (PSPTGYLHVGG). Residues 240-244 (KLSKR) carry the 'KMSKS' region motif. Lys-243 serves as a coordination point for ATP.

This sequence belongs to the class-I aminoacyl-tRNA synthetase family. Glutamate--tRNA ligase type 1 subfamily. As to quaternary structure, monomer.

The protein resides in the cytoplasm. It carries out the reaction tRNA(Glu) + L-glutamate + ATP = L-glutamyl-tRNA(Glu) + AMP + diphosphate. In terms of biological role, catalyzes the attachment of glutamate to tRNA(Glu) in a two-step reaction: glutamate is first activated by ATP to form Glu-AMP and then transferred to the acceptor end of tRNA(Glu). This Vibrio cholerae serotype O1 (strain ATCC 39315 / El Tor Inaba N16961) protein is Glutamate--tRNA ligase.